Consider the following 1040-residue polypeptide: Multidrug resistance protein MdtB (1040 aa).

Transmembrane regions (helical) follow at residues 25-45 (LLMV…PVSA), 347-367 (LMMA…NIPA), 369-389 (IIPG…MVFL), 396-416 (LTLM…IVVI), 440-460 (IGFT…PLLF), 472-492 (FAIT…TLTP), 537-557 (WLTL…WVFI), 863-883 (LGST…VLGI), 888-908 (FIHP…ALLA), 911-931 (IAGS…IGIV), 968-988 (ILMT…STGV), and 998-1018 (IGMV…TPVI).

The protein belongs to the resistance-nodulation-cell division (RND) (TC 2.A.6) family. MdtB subfamily. As to quaternary structure, part of a tripartite efflux system composed of MdtA, MdtB and MdtC. MdtB forms a heteromultimer with MdtC.

Its subcellular location is the cell inner membrane. Its function is as follows. The MdtABC tripartite complex confers resistance against novobiocin and deoxycholate. This Escherichia coli O127:H6 (strain E2348/69 / EPEC) protein is Multidrug resistance protein MdtB.